A 539-amino-acid chain; its full sequence is F-box/WD-40 repeat-containing protein At5g21040 (539 aa).

The region spanning 65–111 (STTIIDLPQALISEILNCLDPKELGLVSCVSTYLHRLASEHHAWKEF) is the F-box domain. WD repeat units follow at residues 160 to 199 (GHTE…SIAA), 201 to 239 (KPLG…RNLF), 255 to 292 (GHEG…CVKT), 294 to 330 (RHSD…PLAI), 334 to 373 (AHEG…SETS), 382 to 419 (PHTS…KTNR), and 433 to 477 (PPQR…EIER). The segment at 505–539 (GRPDQCSIAAHKNPINGERNRAWHSKRRASGKAKA) is disordered. The segment covering 526 to 539 (AWHSKRRASGKAKA) has biased composition (basic residues).

This is F-box/WD-40 repeat-containing protein At5g21040 from Arabidopsis thaliana (Mouse-ear cress).